The sequence spans 589 residues: Glutamine--fructose-6-phosphate aminotransferase [isomerizing] (589 aa).

C2 functions as the Nucleophile; for GATase activity in the catalytic mechanism. A Glutamine amidotransferase type-2 domain is found at 2 to 221; the sequence is CGIIGIVSLR…DDELGFITPE (220 aa). 2 consecutive SIS domains span residues 286 to 426 and 445 to 579; these read VIEE…KMEK and IGEE…PDKP. The For Fru-6P isomerization activity role is filled by K584.

Homodimer.

The protein resides in the cytoplasm. It carries out the reaction D-fructose 6-phosphate + L-glutamine = D-glucosamine 6-phosphate + L-glutamate. Its function is as follows. Catalyzes the first step in hexosamine metabolism, converting fructose-6P into glucosamine-6P using glutamine as a nitrogen source. This Sulfurisphaera tokodaii (strain DSM 16993 / JCM 10545 / NBRC 100140 / 7) (Sulfolobus tokodaii) protein is Glutamine--fructose-6-phosphate aminotransferase [isomerizing].